The following is a 421-amino-acid chain: Probable acid phosphatase (421 aa).

Asp-229 acts as the Proton donor in catalysis.

The enzyme catalyses a phosphate monoester + H2O = an alcohol + phosphate. This chain is Probable acid phosphatase, found in Kluyveromyces lactis (strain ATCC 8585 / CBS 2359 / DSM 70799 / NBRC 1267 / NRRL Y-1140 / WM37) (Yeast).